A 490-amino-acid polypeptide reads, in one-letter code: Zinc finger protein STP4 (490 aa).

Composition is skewed to low complexity over residues 1–16 (MLVS…SVMS) and 52–73 (PSLP…STLN). The tract at residues 1 to 85 (MLVSSSFASS…PPPPLTTSYS (85 aa)) is disordered. A phosphoserine mark is found at Ser-153 and Ser-155. The span at 231–247 (QQQQQLNSSSSASALPS) shows a compositional bias: low complexity. Residues 231–273 (QQQQQLNSSSSASALPSIHSPLTNEHTSRYSSSLKDSAKITKQ) are disordered. A compositionally biased stretch (polar residues) spans 250-265 (SPLTNEHTSRYSSSLK). The C2H2-type zinc-finger motif lies at 304–326 (HKCPICQRGFARNNDLIRHKKRH). The segment at 338–375 (ESDNNSGADDQDDTARTSANNDSDDSNDKLAASSSSEE) is disordered.

The protein resides in the cytoplasm. The protein localises to the mitochondrion. It is found in the nucleus. This is Zinc finger protein STP4 (STP4) from Saccharomyces cerevisiae (strain ATCC 204508 / S288c) (Baker's yeast).